Reading from the N-terminus, the 760-residue chain is Complement C2 (760 aa).

A signal peptide spans 1–18; sequence MAPLLALFYLLQLGPGLA. 3 Sushi domains span residues 20–90, 92–151, and 154–212; these read LFCN…AVCK, VRCL…VCDN, and SHCP…ICRQ. 6 disulfides stabilise this stretch: Cys-22/Cys-62, Cys-49/Cys-89, Cys-94/Cys-136, Cys-122/Cys-149, Cys-156/Cys-197, and Cys-182/Cys-210. 2 N-linked (GlcNAc...) asparagine glycosylation sites follow: Asn-27 and Asn-32. A glycan (N-linked (GlcNAc...) asparagine) is linked at Asn-117. A VWFA domain is found at 261–459; that stretch reads NLYLLLDASQ…KALQQIFEHM (199 aa). An MIDAS-like motif motif is present at residues 267–271; the sequence is DASQS. Residues Ser-269 and Ser-271 each contribute to the Mg(2+) site. N-linked (GlcNAc...) asparagine glycosylation is found at Asn-297 and Asn-340. Thr-344 serves as a coordination point for Mg(2+). Disulfide bonds link Cys-470–Cys-590, Cys-499–Cys-515, Cys-593–Cys-609, Cys-647–Cys-674, and Cys-685–Cys-715. Residues 471–752 form the Peptidase S1 domain; it reads GVGNMSANAS…LQPWLRQHLD (282 aa). 2 N-linked (GlcNAc...) asparagine glycosylation sites follow: Asn-474 and Asn-478. Catalysis depends on charge relay system residues His-514 and Asp-570. Asn-663 is a glycosylation site (N-linked (GlcNAc...) asparagine). Ser-689 serves as the catalytic Charge relay system.

It belongs to the peptidase S1 family. As to quaternary structure, serine protease component of the C3 convertase, also named C4bC2b, composed of the serine protease complement C2b and complement C4b. Serine protease component of the C5 convertase, also named C4bC2bC3b, composed of the serine protease complement C2b, complement C3b, as well as complement C4b. It depends on Mg(2+) as a cofactor. Mn(2+) serves as cofactor. Cleaved and activated by different proteases depending on the complement pathway to generate complement C2a and serine protease complement C2b chains. Cleaved and activated by C1S following activation by the classical complement system. Cleaved and activated by MASP2 following activation by the lectin complement system. Cleaved and activated by GZMK following activation by the GZMK complement system.

Its subcellular location is the secreted. It is found in the cell surface. The enzyme catalyses Selective cleavage of Arg-|-Ser bond in complement component C3 alpha-chain to form C3a and C3b, and Arg-|-Xaa bond in complement component C5 alpha-chain to form C5a and C5b.. Precursor of the catalytic component of the C3 and C5 convertase complexes, which are part of the complement pathway, a cascade of proteins that leads to phagocytosis and breakdown of pathogens and signaling that strengthens the adaptive immune system. Component C2 is part of the classical, lectin and GZMK complement systems. Functionally, catalytic component of the complement C3 and C5 convertase complexes. Following complement activation, recruited to the surface of pathogens by complement C4b opsonin to form the C3 convertase, or C3b and C4b opsonins to form the C5 convertase. As part of the C3 convertase, cleaves and activate C3 into C3a anaphylatoxin and C3b opsonin, the next components of the complement pathways. As part of the C5 convertase, cleaves and activate C5 into C5a anaphylatoxin and C5b component of the membrane attack complex. This chain is Complement C2, found in Mus musculus (Mouse).